Consider the following 290-residue polypeptide: 4-diphosphocytidyl-2-C-methyl-D-erythritol kinase (290 aa).

Residue lysine 11 is part of the active site. 97 to 107 lines the ATP pocket; the sequence is PVAAGIGGGSS. The active site involves aspartate 139.

This sequence belongs to the GHMP kinase family. IspE subfamily.

It carries out the reaction 4-CDP-2-C-methyl-D-erythritol + ATP = 4-CDP-2-C-methyl-D-erythritol 2-phosphate + ADP + H(+). It functions in the pathway isoprenoid biosynthesis; isopentenyl diphosphate biosynthesis via DXP pathway; isopentenyl diphosphate from 1-deoxy-D-xylulose 5-phosphate: step 3/6. Functionally, catalyzes the phosphorylation of the position 2 hydroxy group of 4-diphosphocytidyl-2C-methyl-D-erythritol. The chain is 4-diphosphocytidyl-2-C-methyl-D-erythritol kinase from Methylobacterium radiotolerans (strain ATCC 27329 / DSM 1819 / JCM 2831 / NBRC 15690 / NCIMB 10815 / 0-1).